Consider the following 174-residue polypeptide: Beta-lactoglobulin (174 aa).

A signal peptide spans 1–18 (MKFLLLTVGLALIGAIQA). 2 cysteine pairs are disulfide-bonded: C79–C172 and C122–C134.

The protein belongs to the calycin superfamily. Lipocalin family. As to quaternary structure, monomer.

Its subcellular location is the secreted. Functionally, lactoglobulin is the primary component of whey, it binds retinol and is probably involved in the transport of that molecule. This Notamacropus eugenii (Tammar wallaby) protein is Beta-lactoglobulin (LGB).